A 304-amino-acid polypeptide reads, in one-letter code: Acetyl-coenzyme A carboxylase carboxyl transferase subunit beta (304 aa).

Residues V23–V292 form the CoA carboxyltransferase N-terminal domain. The Zn(2+) site is built by C27, C30, C46, and C49. The C4-type zinc finger occupies C27–C49. The disordered stretch occupies residues P283–A304.

It belongs to the AccD/PCCB family. In terms of assembly, acetyl-CoA carboxylase is a heterohexamer composed of biotin carboxyl carrier protein (AccB), biotin carboxylase (AccC) and two subunits each of ACCase subunit alpha (AccA) and ACCase subunit beta (AccD). The cofactor is Zn(2+).

It is found in the cytoplasm. It catalyses the reaction N(6)-carboxybiotinyl-L-lysyl-[protein] + acetyl-CoA = N(6)-biotinyl-L-lysyl-[protein] + malonyl-CoA. Its pathway is lipid metabolism; malonyl-CoA biosynthesis; malonyl-CoA from acetyl-CoA: step 1/1. In terms of biological role, component of the acetyl coenzyme A carboxylase (ACC) complex. Biotin carboxylase (BC) catalyzes the carboxylation of biotin on its carrier protein (BCCP) and then the CO(2) group is transferred by the transcarboxylase to acetyl-CoA to form malonyl-CoA. The polypeptide is Acetyl-coenzyme A carboxylase carboxyl transferase subunit beta (Salmonella agona (strain SL483)).